The chain runs to 956 residues: Run domain Beclin-1-interacting and cysteine-rich domain-containing protein (956 aa).

An RUN domain is found at 49-190; that stretch reads WSKYGGLERL…PRLLAQIDAS (142 aa). The interaction with PIK3C3 stretch occupies residues 50 to 181; that stretch reads SKYGGLERLC…CLEAVEQNNP (132 aa). Ser198 is modified (phosphoserine). Positions 205 to 437 are interaction with YWHAB; that stretch reads SQSLTALPGS…ITIIVEDPIA (233 aa). Positions 233–242 are enriched in low complexity; the sequence is SLQSMPQSSH. Residues 233 to 423 form a disordered region; that stretch reads SLQSMPQSSH…TNIASRGAAG (191 aa). Phosphoserine is present on residues Ser250 and Ser268. Residues 270–319 are compositionally biased toward polar residues; it reads AETQTTPAPLPSDSTLAQDSPLTAQEMSDSTLTSPLEASWVSSQNDSPSD. The tract at residues 302–585 is interaction with UVRAG; the sequence is TSPLEASWVS…DLEIQDADIR (284 aa). The span at 339-371 shows a compositional bias: low complexity; the sequence is ASCESHSSNGESSSSHLFSSSSSQKLESAASSL. Polar residues predominate over residues 379 to 395; that stretch reads QSQAGSVLRRSSFSEGQ. Phosphoserine is present on residues Ser390, Ser412, Ser513, and Ser547. Residues 490-542 form an interaction with BECN1 region; it reads AIELMKCNMMSQCLEEEEVEEEDSDREIQELKQKIRLRRQQIRTKNLLPAYRE. Positions 547 to 566 are enriched in low complexity; that stretch reads SFRVTSSSSQFSSRDSTQLS. The segment at 547–579 is disordered; sequence SFRVTSSSSQFSSRDSTQLSESGSAEDADDLEI. The interval 552 to 609 is interaction with CYBA; that stretch reads SSSSQFSSRDSTQLSESGSAEDADDLEIQDADIRRSAVSNGKSSFSQNLSHCFLHSTS. Residues 570-579 show a composition bias toward acidic residues; the sequence is SAEDADDLEI. Ser655 carries the phosphoserine modification. Residues 656 to 744 are interaction with CARD9; sequence PDDGQHADIY…HENAQMVVPS (89 aa). Positions 705 to 956 are interaction with Rab7; that stretch reads CAGCGIRTDP…ALEATVLETT (252 aa).

Associates with PI3K (PI3KC3/PI3K-III/class III phosphatidylinositol 3-kinase) complex II (PI3KC3-C2) in which the core composed of the catalytic subunit PIK3C3, the regulatory subunit PIK3R4 and BECN1 is associated with UVRAG; in the complex interacts directly with PI3KC3 and UVRAG. Interacts with Rab7 (RAB7A or RAB7B) (GTP-bound form); Rab7 and UVRAG compete for RUBCN binding; can interact simultaneously with Rab7 and the PI3K complex. Interacts with CYBA and CYBB; indicative for the association with the CYBA:CYBB NADPH oxidase heterodimer. Interacts with NOX4 and probably associates with the CYBA:NOX4 complex. Interacts with YWHAB and CARD9 in a competitive and stimulation-dependent manner; RUBCN exchanges interaction from YWHAB to CARD9 upon stimulation with beta-1,3-glucan.

The protein localises to the late endosome. Its subcellular location is the lysosome. It localises to the early endosome. In terms of biological role, inhibits PIK3C3 activity; under basal conditions negatively regulates PI3K complex II (PI3KC3-C2) function in autophagy. Negatively regulates endosome maturation and degradative endocytic trafficking and impairs autophagosome maturation process. Can sequester UVRAG from association with a class C Vps complex (possibly the HOPS complex) and negatively regulates Rab7 activation. Functionally, involved in regulation of pathogen-specific host defense of activated macrophages. Following bacterial infection promotes NADH oxidase activity by association with CYBA thereby affecting TLR2 signaling and probably other TLR-NOX pathways. Stabilizes the CYBA:CYBB NADPH oxidase heterodimer, increases its association with TLR2 and its phagosome trafficking to induce antimicrobial burst of ROS and production of inflammatory cytokines. Following fungal or viral infection (implicating CLEC7A (dectin-1)-mediated myeloid cell activation or RIGI-dependent sensing of RNA viruses) negatively regulates pro-inflammatory cytokine production by association with CARD9 and sequestering it from signaling complexes. This chain is Run domain Beclin-1-interacting and cysteine-rich domain-containing protein, found in Mus musculus (Mouse).